The following is a 103-amino-acid chain: Sec-independent protein translocase protein TatA (103 aa).

A helical transmembrane segment spans residues 1-21 (MGNIFSPTHLIIILLLILLLF). The disordered stretch occupies residues 48–103 (EESIEDKVEMADTSQVINEESQQSQPLSVKRAAIRRKASSDSKGGKASIAKKQRVK). Residues 59–74 (DTSQVINEESQQSQPL) show a composition bias toward polar residues.

The protein belongs to the TatA/E family. The Tat system comprises two distinct complexes: a TatABC complex, containing multiple copies of TatA, TatB and TatC subunits, and a separate TatA complex, containing only TatA subunits. Substrates initially bind to the TatABC complex, which probably triggers association of the separate TatA complex to form the active translocon.

It localises to the cell inner membrane. In terms of biological role, part of the twin-arginine translocation (Tat) system that transports large folded proteins containing a characteristic twin-arginine motif in their signal peptide across membranes. TatA could form the protein-conducting channel of the Tat system. The polypeptide is Sec-independent protein translocase protein TatA (Bartonella tribocorum (strain CIP 105476 / IBS 506)).